Reading from the N-terminus, the 232-residue chain is Lipoprotein-releasing system ATP-binding protein LolD 2 (232 aa).

The ABC transporter domain occupies 11–231 (VYLHDIKRQY…SLQDGVVVEL (221 aa)). 47-54 (APSGSGKS) contacts ATP.

It belongs to the ABC transporter superfamily. Lipoprotein translocase (TC 3.A.1.125) family. The complex is composed of two ATP-binding proteins (LolD) and two transmembrane proteins (LolC and LolE).

Its subcellular location is the cell inner membrane. Part of the ABC transporter complex LolCDE involved in the translocation of mature outer membrane-directed lipoproteins, from the inner membrane to the periplasmic chaperone, LolA. Responsible for the formation of the LolA-lipoprotein complex in an ATP-dependent manner. The chain is Lipoprotein-releasing system ATP-binding protein LolD 2 from Rhodopseudomonas palustris (strain ATCC BAA-98 / CGA009).